A 210-amino-acid chain; its full sequence is 3-hexulose-6-phosphate synthase (210 aa).

It belongs to the HPS/KGPDC family. HPS subfamily.

It catalyses the reaction D-ribulose 5-phosphate + formaldehyde = D-arabino-hex-3-ulose 6-phosphate. The protein operates within one-carbon metabolism; formaldehyde assimilation via RuMP pathway; D-fructose 6-phosphate from D-ribulose 5-phosphate and formaldehyde: step 1/2. Functionally, catalyzes the condensation of ribulose 5-phosphate with formaldehyde to form 3-hexulose 6-phosphate. Together with HxlB, may act as a formaldehyde detoxification system. The chain is 3-hexulose-6-phosphate synthase (hxlA) from Bacillus subtilis (strain 168).